A 689-amino-acid polypeptide reads, in one-letter code: Ataxin-1-like (689 aa).

Residues Met-1–Leu-19 are compositionally biased toward basic and acidic residues. 3 disordered regions span residues Met-1 to Ser-46, Ala-185 to Ala-223, and Leu-242 to Gln-297. The interval Pro-20 to Ser-197 is interaction with NCOR2 and ATXN1. Residues Pro-20–Ser-197 form a self-association region. Composition is skewed to polar residues over residues Arg-28–Ser-43 and Lys-200–Pro-219. Residues Gln-257 to Ala-268 are compositionally biased toward low complexity. A compositionally biased stretch (basic and acidic residues) spans Arg-273–Glu-285. The residue at position 284 (Ser-284) is a Phosphoserine. Thr-330 carries the phosphothreonine modification. Residues Lys-357–Lys-405 form a disordered region. Phosphoserine is present on Ser-361. The AXH domain occupies Pro-457–Asn-588. Position 615 is a phosphoserine (Ser-615). The disordered stretch occupies residues Glu-617–Cys-647.

This sequence belongs to the ATXN1 family. As to quaternary structure, homodimer. Interacts with CIC. Interacts (via AXH domain) with NCOR2. Interacts with ATXN1. Directly interacts with RBPJ; this interaction is disrupted in the presence of Notch intracellular domain. Competes with ATXN1 for RBPJ-binding. Found in a complex with CIC and ATXN1. In terms of tissue distribution, expressed in cerebellum and cerebral cortex.

The protein resides in the nucleus. It is found in the cell projection. The protein localises to the dendrite. Functionally, chromatin-binding factor that repress Notch signaling in the absence of Notch intracellular domain by acting as a CBF1 corepressor. Binds to the HEY promoter and might assist, along with NCOR2, RBPJ-mediated repression. Can suppress ATXN1 cytotoxicity in spinocerebellar ataxia type 1 (SCA1). In concert with CIC and ATXN1, involved in brain development. This chain is Ataxin-1-like (ATXN1L), found in Homo sapiens (Human).